Reading from the N-terminus, the 103-residue chain is Large ribosomal subunit protein bL21 (103 aa).

It belongs to the bacterial ribosomal protein bL21 family. In terms of assembly, part of the 50S ribosomal subunit. Contacts protein L20.

Its function is as follows. This protein binds to 23S rRNA in the presence of protein L20. The sequence is that of Large ribosomal subunit protein bL21 from Psychromonas ingrahamii (strain DSM 17664 / CCUG 51855 / 37).